Reading from the N-terminus, the 476-residue chain is Bifunctional protein HldE (476 aa).

The interval 1 to 318 is ribokinase; that stretch reads MKPILPDYNN…AEAIHGSRDT (318 aa). Residue 195–198 coordinates ATP; that stretch reads NMSE. Asp264 is a catalytic residue. The segment at 344 to 476 is cytidylyltransferase; the sequence is MTNGCFDILH…IIDAIKGGRG (133 aa).

The protein in the N-terminal section; belongs to the carbohydrate kinase PfkB family. In the C-terminal section; belongs to the cytidylyltransferase family. As to quaternary structure, homodimer.

It carries out the reaction D-glycero-beta-D-manno-heptose 7-phosphate + ATP = D-glycero-beta-D-manno-heptose 1,7-bisphosphate + ADP + H(+). The catalysed reaction is D-glycero-beta-D-manno-heptose 1-phosphate + ATP + H(+) = ADP-D-glycero-beta-D-manno-heptose + diphosphate. It participates in nucleotide-sugar biosynthesis; ADP-L-glycero-beta-D-manno-heptose biosynthesis; ADP-L-glycero-beta-D-manno-heptose from D-glycero-beta-D-manno-heptose 7-phosphate: step 1/4. The protein operates within nucleotide-sugar biosynthesis; ADP-L-glycero-beta-D-manno-heptose biosynthesis; ADP-L-glycero-beta-D-manno-heptose from D-glycero-beta-D-manno-heptose 7-phosphate: step 3/4. It functions in the pathway bacterial outer membrane biogenesis; LPS core biosynthesis. Catalyzes the phosphorylation of D-glycero-D-manno-heptose 7-phosphate at the C-1 position to selectively form D-glycero-beta-D-manno-heptose-1,7-bisphosphate. Functionally, catalyzes the ADP transfer from ATP to D-glycero-beta-D-manno-heptose 1-phosphate, yielding ADP-D-glycero-beta-D-manno-heptose. This chain is Bifunctional protein HldE, found in Vibrio vulnificus (strain CMCP6).